The primary structure comprises 337 residues: Glyceraldehyde-3-phosphate dehydrogenase (337 aa).

NAD(+) is bound by residues 11-12 (TI) and glycine 111. Residue 140-142 (SCN) participates in D-glyceraldehyde 3-phosphate binding. Cysteine 141 (nucleophile) is an active-site residue. Arginine 169 contacts NAD(+). A disordered region spans residues 177–196 (KKGPINSIVPTTEVPSHHGP). 194 to 195 (HG) contacts D-glyceraldehyde 3-phosphate. Glutamine 301 serves as a coordination point for NAD(+).

The protein belongs to the glyceraldehyde-3-phosphate dehydrogenase family. As to quaternary structure, homotetramer.

It is found in the cytoplasm. It carries out the reaction D-glyceraldehyde 3-phosphate + phosphate + NADP(+) = (2R)-3-phospho-glyceroyl phosphate + NADPH + H(+). The catalysed reaction is D-glyceraldehyde 3-phosphate + phosphate + NAD(+) = (2R)-3-phospho-glyceroyl phosphate + NADH + H(+). Its pathway is carbohydrate degradation; glycolysis; pyruvate from D-glyceraldehyde 3-phosphate: step 1/5. This Methanosphaera stadtmanae (strain ATCC 43021 / DSM 3091 / JCM 11832 / MCB-3) protein is Glyceraldehyde-3-phosphate dehydrogenase.